The sequence spans 316 residues: Carbamate kinase-like protein YahI (316 aa).

The protein belongs to the carbamate kinase family.

In Escherichia coli (strain K12), this protein is Carbamate kinase-like protein YahI (yahI).